We begin with the raw amino-acid sequence, 403 residues long: Tryptophan synthase beta chain (403 aa).

K88 bears the N6-(pyridoxal phosphate)lysine mark.

This sequence belongs to the TrpB family. Tetramer of two alpha and two beta chains. The cofactor is pyridoxal 5'-phosphate.

It catalyses the reaction (1S,2R)-1-C-(indol-3-yl)glycerol 3-phosphate + L-serine = D-glyceraldehyde 3-phosphate + L-tryptophan + H2O. It functions in the pathway amino-acid biosynthesis; L-tryptophan biosynthesis; L-tryptophan from chorismate: step 5/5. Functionally, the beta subunit is responsible for the synthesis of L-tryptophan from indole and L-serine. The chain is Tryptophan synthase beta chain from Shewanella frigidimarina (strain NCIMB 400).